The sequence spans 372 residues: Actin-related protein 2/3 complex subunit 1B (372 aa).

WD repeat units follow at residues 6–45, 50–89, 94–135, 140–179, 242–280, and 324–367; these read FLVE…WVQV, EHNG…WKPT, RINR…WVCK, PIRS…VEER, SETL…GKLS, and LHKN…SALK.

Belongs to the WD repeat ARPC1 family. In terms of assembly, component of the Arp2/3 complex composed of ACTR2/ARP2, ACTR3/ARP3, ARPC1B/p41-ARC, ARPC2/p34-ARC, ARPC3/p21-ARC, ARPC4/p20-ARC and ARPC5/p16-ARC.

Its subcellular location is the cytoplasm. It is found in the cytoskeleton. The protein localises to the nucleus. Component of the Arp2/3 complex, a multiprotein complex that mediates actin polymerization upon stimulation by nucleation-promoting factor (NPF). The Arp2/3 complex mediates the formation of branched actin networks in the cytoplasm, providing the force for cell motility. In addition to its role in the cytoplasmic cytoskeleton, the Arp2/3 complex also promotes actin polymerization in the nucleus, thereby regulating gene transcription and repair of damaged DNA. The Arp2/3 complex promotes homologous recombination (HR) repair in response to DNA damage by promoting nuclear actin polymerization, leading to drive motility of double-strand breaks (DSBs). The polypeptide is Actin-related protein 2/3 complex subunit 1B (ARPC1B) (Bos taurus (Bovine)).